The sequence spans 333 residues: 4-hydroxyproline 2-epimerase (333 aa).

Cys-90 (proton acceptor) is an active-site residue. Residues 91-92, His-223, and Asp-249 each bind substrate; that span reads GH. The Proton donor role is filled by Cys-253. Substrate is bound at residue 254-255; the sequence is GT.

The protein belongs to the proline racemase family.

It catalyses the reaction trans-4-hydroxy-L-proline = cis-4-hydroxy-D-proline. Its function is as follows. Catalyzes the epimerization of trans-4-hydroxy-L-proline (t4LHyp) to cis-4-hydroxy-D-proline (c4DHyp). Is likely involved in a degradation pathway that converts t4LHyp to alpha-ketoglutarate. Displays no proline racemase activity. This is 4-hydroxyproline 2-epimerase from Shewanella loihica (strain ATCC BAA-1088 / PV-4).